The chain runs to 131 residues: Single-stranded DNA-binding protein 1 (131 aa).

The 103-residue stretch at methionine 1–glutamate 103 folds into the SSB domain.

As to quaternary structure, homotetramer.

This Streptococcus pyogenes serotype M6 (strain ATCC BAA-946 / MGAS10394) protein is Single-stranded DNA-binding protein 1 (ssb1).